A 156-amino-acid polypeptide reads, in one-letter code: Small ribosomal subunit protein bS16 (156 aa).

Low complexity-rich tracts occupy residues 113–123 and 137–156; these read AESGTTAAATT and EAPA…ASES. Residues 113–156 are disordered; that stretch reads AESGTTAAATTPKKKKAPKKDEAAEAPAEAAEAPAEAADAASES.

The protein belongs to the bacterial ribosomal protein bS16 family.

This chain is Small ribosomal subunit protein bS16, found in Mycolicibacterium smegmatis (strain ATCC 700084 / mc(2)155) (Mycobacterium smegmatis).